Consider the following 417-residue polypeptide: Acetyltransferase cdmC (417 aa).

Asparagine 64 carries N-linked (GlcNAc...) asparagine glycosylation. The next 3 membrane-spanning stretches (helical) occupy residues isoleucine 308–valine 328, glycine 357–leucine 377, and leucine 389–leucine 409.

Belongs to the wax synthase family.

Its subcellular location is the membrane. The catalysed reaction is chrodrimanin A + acetyl-CoA = chrodrimanin B + CoA. It functions in the pathway secondary metabolite biosynthesis; terpenoid biosynthesis. Its function is as follows. Acetyltransferase; part of the gene cluster that mediates the biosynthesis of chrodrimanin B, a meroterpenoid that acts as a potent blocker of insect GABA-gated chloride channels. The first step of the pathway is the biosynthesis of 6-hydroxymellein by the polyketide synthase cdmE. The prenyltransferase cdmH acts as a 6-hydroxymellein 5-farnesyltransferase and produces the hydrophobic metabolite verruculide C. The FAD-dependent monooxygenase cdmI further converts verruculide C into verruculide B. The terpene cyclase cdmG then produced the pentacyclic molecule 3-hydroxypentacecilide A, the backbone structure of chrodrimanin B, via folding the farnesyl moiety of the substrate into the chair-boat conformation. The short-chain dehydrogenase/reductase cdmF functions as the 3-OH dehydrogenase that oxidizes the C-3 hydroxyl group of 3-hydroxypentacecilide A and produces chrodrimanin C, the dehydrogenated product of 3-hydroxypentacecilide A. The cytochrome P450 monooxygenase cdmJ then accepts both 3-hydroxypentacecilide A and chrodrimanin C and functions as a C-7-beta-hydroxylase to produce respectively chrodrimanin H and chrodrimanin F. The dioxygenase cdmA accepts chrodrimanin H to afford chrodrimanin E, which is further transformed to chrodrimanin A by the dioxygenase cdmD. CdmA can also accept chrodrimanin C as substrate to convert it into verruculide A, which is further converted into chrodrimanin T by cdmD. The last step of the biosynthesis is proposed to be performed by the acetyltransferase cdmC which acetylates chrodrimanin A to yield chrodrimanin B. The pathway may also lead to the production of additional shunt products, including chrodrimanins T and U. This Talaromyces verruculosus (Penicillium verruculosum) protein is Acetyltransferase cdmC.